Reading from the N-terminus, the 351-residue chain is c-di-GMP synthase (351 aa).

The protein belongs to the CD-NTase family. E05 subfamily.

The catalysed reaction is 2 GTP = 3',3'-c-di-GMP + 2 diphosphate. Cyclic nucleotide synthase (second messenger synthase) of a CBASS antivirus system. CBASS (cyclic oligonucleotide-based antiphage signaling system) provides immunity against bacteriophage. The CD-NTase protein synthesizes cyclic nucleotides in response to infection; these serve as specific second messenger signals. The signals activate a diverse range of effectors, leading to bacterial cell death and thus abortive phage infection. A type I-D(GG) CBASS system. In terms of biological role, cyclic dinucleotide synthase that catalyzes the synthesis of c-di-GMP, has no activity with other NTP substrates. This chain is c-di-GMP synthase (cdnE), found in Capnocytophaga granulosa (strain ATCC 51502 / DSM 11449 / JCM 8566 / LMG 16022 / NCTC 12948 / B0611).